The following is a 155-amino-acid chain: FHA domain-containing protein FhaB (155 aa).

Residues 6 to 28 (LQLTRVGFLLLLWLFIWSVLRIL) traverse the membrane as a helical segment. Position 36 is a phosphothreonine (Thr36). The region spanning 83–132 (VLIGRADDSTLVLTDDYASTRHARLSPRGSEWYVEDLGSTNGTYLDRAKV) is the FHA domain.

Post-translationally, phosphorylated by PknB. Dephosphorylated by PstP.

It localises to the cell membrane. This chain is FHA domain-containing protein FhaB (fhaB), found in Mycolicibacterium smegmatis (strain ATCC 700084 / mc(2)155) (Mycobacterium smegmatis).